A 224-amino-acid polypeptide reads, in one-letter code: Ribonuclease T (224 aa).

The Exonuclease domain occupies 32 to 206 (VVVDVETGGF…YDTEKTAELF (175 aa)). Mg(2+) contacts are provided by D35, E37, H193, and D198. The active-site Proton donor/acceptor is the H193.

This sequence belongs to the RNase T family. In terms of assembly, homodimer. It depends on Mg(2+) as a cofactor.

Trims short 3' overhangs of a variety of RNA species, leaving a one or two nucleotide 3' overhang. Responsible for the end-turnover of tRNA: specifically removes the terminal AMP residue from uncharged tRNA (tRNA-C-C-A). Also appears to be involved in tRNA biosynthesis. The polypeptide is Ribonuclease T (Pseudomonas paraeruginosa (strain DSM 24068 / PA7) (Pseudomonas aeruginosa (strain PA7))).